Consider the following 159-residue polypeptide: Deoxyuridine 5'-triphosphate nucleotidohydrolase (159 aa).

Substrate contacts are provided by residues 78–80, Asn91, 95–97, and Met105; these read RSG and LID.

Belongs to the dUTPase family. It depends on Mg(2+) as a cofactor.

It carries out the reaction dUTP + H2O = dUMP + diphosphate + H(+). The protein operates within pyrimidine metabolism; dUMP biosynthesis; dUMP from dCTP (dUTP route): step 2/2. In terms of biological role, this enzyme is involved in nucleotide metabolism: it produces dUMP, the immediate precursor of thymidine nucleotides and it decreases the intracellular concentration of dUTP so that uracil cannot be incorporated into DNA. The sequence is that of Deoxyuridine 5'-triphosphate nucleotidohydrolase from Buchnera aphidicola subsp. Schizaphis graminum (strain Sg).